The chain runs to 594 residues: Elongation factor 4 (594 aa).

Residues 2–184 form the tr-type G domain; the sequence is KNIRNFSIIA…TIVAKVPAPE (183 aa). GTP contacts are provided by residues 14–19 and 131–134; these read DHGKST and NKID.

It belongs to the TRAFAC class translation factor GTPase superfamily. Classic translation factor GTPase family. LepA subfamily.

Its subcellular location is the cell inner membrane. It carries out the reaction GTP + H2O = GDP + phosphate + H(+). Its function is as follows. Required for accurate and efficient protein synthesis under certain stress conditions. May act as a fidelity factor of the translation reaction, by catalyzing a one-codon backward translocation of tRNAs on improperly translocated ribosomes. Back-translocation proceeds from a post-translocation (POST) complex to a pre-translocation (PRE) complex, thus giving elongation factor G a second chance to translocate the tRNAs correctly. Binds to ribosomes in a GTP-dependent manner. This is Elongation factor 4 from Francisella tularensis subsp. novicida (strain U112).